Consider the following 332-residue polypeptide: Adenosine deaminase (332 aa).

The Zn(2+) site is built by H12 and H14. H14, D16, and G170 together coordinate substrate. H197 is a Zn(2+) binding site. E200 serves as the catalytic Proton donor. D278 lines the Zn(2+) pocket.

This sequence belongs to the metallo-dependent hydrolases superfamily. Adenosine and AMP deaminases family. Adenosine deaminase subfamily. It depends on Zn(2+) as a cofactor.

The enzyme catalyses adenosine + H2O + H(+) = inosine + NH4(+). The catalysed reaction is 2'-deoxyadenosine + H2O + H(+) = 2'-deoxyinosine + NH4(+). Functionally, catalyzes the hydrolytic deamination of adenosine and 2-deoxyadenosine. The sequence is that of Adenosine deaminase from Clostridium perfringens (strain SM101 / Type A).